We begin with the raw amino-acid sequence, 513 residues long: Type-2 serine--tRNA ligase (513 aa).

Ala312 serves as a coordination point for L-serine. Zn(2+) is bound at residue Cys314. Arg344 is a binding site for L-serine. ATP is bound by residues 344 to 346 (RWE) and 355 to 356 (RV). Position 361–363 (361–363 (RVE)) interacts with L-serine. Zn(2+) is bound by residues Glu363 and Cys467. Arg474 serves as a coordination point for ATP.

The protein belongs to the class-II aminoacyl-tRNA synthetase family. Type-2 seryl-tRNA synthetase subfamily. As to quaternary structure, homodimer. It depends on Zn(2+) as a cofactor.

Its subcellular location is the cytoplasm. It carries out the reaction tRNA(Ser) + L-serine + ATP = L-seryl-tRNA(Ser) + AMP + diphosphate + H(+). It catalyses the reaction tRNA(Sec) + L-serine + ATP = L-seryl-tRNA(Sec) + AMP + diphosphate + H(+). It participates in aminoacyl-tRNA biosynthesis; selenocysteinyl-tRNA(Sec) biosynthesis; L-seryl-tRNA(Sec) from L-serine and tRNA(Sec): step 1/1. In terms of biological role, catalyzes the attachment of serine to tRNA(Ser). Is also able to aminoacylate tRNA(Sec) with serine, to form the misacylated tRNA L-seryl-tRNA(Sec), which will be further converted into selenocysteinyl-tRNA(Sec). The protein is Type-2 serine--tRNA ligase (serS) of Methanothermobacter thermautotrophicus (strain ATCC 29096 / DSM 1053 / JCM 10044 / NBRC 100330 / Delta H) (Methanobacterium thermoautotrophicum).